Reading from the N-terminus, the 526-residue chain is Spermatogenesis-associated protein 7 homolog (526 aa).

Residues 203 to 240 form a disordered region; the sequence is DFSDQRMEAETQTELSSFNSELGTAEKKSSKDSDVSIK. A compositionally biased stretch (polar residues) spans 212-224; sequence ETQTELSSFNSEL. Over residues 226–237 the composition is skewed to basic and acidic residues; that stretch reads TAEKKSSKDSDV.

In terms of assembly, found in a complex with CFAP410, NEK1 and SPATA7. Interacts with NEK1. Interacts with RPGRIP1. Interacts with RPGR. Interacts with NPHP4. Interacts with NPHP1. Interacts with AHI1. In terms of tissue distribution, in early prophase of primary spermatocytes.

Its subcellular location is the cytoplasm. The protein resides in the cytoskeleton. It is found in the cilium axoneme. It localises to the cilium basal body. The protein localises to the cell projection. Its subcellular location is the cilium. The protein resides in the photoreceptor outer segment. Functionally, involved in the maintenance of both rod and cone photoreceptor cells. Required for photoreceptor-specific localization of proximal connecting cilium (CC) proteins RPGR, AHI1, NPHP1, NPHP4, and RPGRIP1 at the distal CC, a photoreceptor-specific extension of the primary cilium transition zone. Maintenance of protein localization at the photoreceptor-specific distal CC is essential for normal microtubule stability and to prevent photoreceptor degeneration. The protein is Spermatogenesis-associated protein 7 homolog (Spata7) of Rattus norvegicus (Rat).